We begin with the raw amino-acid sequence, 201 residues long: 3-isopropylmalate dehydratase small subunit (201 aa).

This sequence belongs to the LeuD family. LeuD type 1 subfamily. As to quaternary structure, heterodimer of LeuC and LeuD.

It catalyses the reaction (2R,3S)-3-isopropylmalate = (2S)-2-isopropylmalate. Its pathway is amino-acid biosynthesis; L-leucine biosynthesis; L-leucine from 3-methyl-2-oxobutanoate: step 2/4. Its function is as follows. Catalyzes the isomerization between 2-isopropylmalate and 3-isopropylmalate, via the formation of 2-isopropylmaleate. The protein is 3-isopropylmalate dehydratase small subunit of Cereibacter sphaeroides (strain KD131 / KCTC 12085) (Rhodobacter sphaeroides).